A 59-amino-acid chain; its full sequence is Large ribosomal subunit protein uL30 (59 aa).

The protein belongs to the universal ribosomal protein uL30 family. In terms of assembly, part of the 50S ribosomal subunit.

This Enterobacter sp. (strain 638) protein is Large ribosomal subunit protein uL30.